The sequence spans 101 residues: Small ribosomal subunit protein bS6 (101 aa).

The protein belongs to the bacterial ribosomal protein bS6 family.

Binds together with bS18 to 16S ribosomal RNA. This chain is Small ribosomal subunit protein bS6, found in Arthrobacter sp. (strain FB24).